Here is a 125-residue protein sequence, read N- to C-terminus: Phosphoribosyl-AMP cyclohydrolase (125 aa).

Aspartate 74 lines the Mg(2+) pocket. Cysteine 75 contacts Zn(2+). Positions 76 and 78 each coordinate Mg(2+). Residues cysteine 92 and cysteine 99 each coordinate Zn(2+).

The protein belongs to the PRA-CH family. In terms of assembly, homodimer. Requires Mg(2+) as cofactor. The cofactor is Zn(2+).

The protein resides in the cytoplasm. It catalyses the reaction 1-(5-phospho-beta-D-ribosyl)-5'-AMP + H2O = 1-(5-phospho-beta-D-ribosyl)-5-[(5-phospho-beta-D-ribosylamino)methylideneamino]imidazole-4-carboxamide. Its pathway is amino-acid biosynthesis; L-histidine biosynthesis; L-histidine from 5-phospho-alpha-D-ribose 1-diphosphate: step 3/9. Catalyzes the hydrolysis of the adenine ring of phosphoribosyl-AMP. The polypeptide is Phosphoribosyl-AMP cyclohydrolase (Pelobacter propionicus (strain DSM 2379 / NBRC 103807 / OttBd1)).